The sequence spans 250 residues: Cholesterol ring-cleaving hydrolase IpdB subunit (250 aa).

This sequence belongs to the 3-oxoacid CoA-transferase subunit B family. Heterotetramer composed of 2 IpdA subunits and 2 IpdB subunits.

It carries out the reaction (3E)-2-(2-carboxylatoethyl)-3-methyl-6-oxocyclohex-1-ene-1-carboxyl-CoA + H2O = 6-methyl-3,7-dioxodecanedioyl-CoA. It functions in the pathway steroid metabolism; cholesterol degradation. Involved in the final steps of cholesterol and steroid degradation. Opens the last steroid ring of cholesterol by catalyzing the hydrolysis of (3E)-2-(2-carboxylatoethyl)-3-methyl-6-oxocyclohex-1-ene-1-carboxyl-CoA (COCHEA-CoA) to 6-methyl-3,7-dioxodecanedioyl-CoA (MeDODA-CoA). This chain is Cholesterol ring-cleaving hydrolase IpdB subunit, found in Mycobacterium bovis (strain ATCC BAA-935 / AF2122/97).